The primary structure comprises 105 residues: uncharacterized protein (105 aa).

This is an uncharacterized protein from Haemophilus influenzae (strain ATCC 51907 / DSM 11121 / KW20 / Rd).